Reading from the N-terminus, the 272-residue chain is Centromere protein V-like protein 3 (272 aa).

Basic residues predominate over residues 1 to 17 (MGRVRNRATAQRRRRKR). 2 disordered regions span residues 1–23 (MGRVRNRATAQRRRRKRPGDPPA) and 65–95 (RRAREAGSRDPLPSAPLPDPPAPAESPKELD). Positions 77-88 (PSAPLPDPPAPA) are enriched in pro residues. The CENP-V/GFA domain occupies 133 to 246 (HTGGCHCGAV…EEVGGGDPGE (114 aa)). Zn(2+)-binding residues include cysteine 137, cysteine 139, cysteine 157, cysteine 159, cysteine 162, cysteine 201, and cysteine 204. Positions 240–272 (GGGDPGEEAAEEHKAIHKTSSQSAPACPREQEQ) are disordered.

This sequence belongs to the Gfa family. The cofactor is Zn(2+).

The polypeptide is Centromere protein V-like protein 3 (Homo sapiens (Human)).